The sequence spans 327 residues: Malate dehydrogenase (327 aa).

12–18 is a binding site for NAD(+); that stretch reads GAAGQIA. The substrate site is built by Arg93 and Arg99. NAD(+) contacts are provided by residues Asn106, Gln113, and 130–132; that span reads VGN. Substrate-binding residues include Asn132 and Arg163. The Proton acceptor role is filled by His188.

This sequence belongs to the LDH/MDH superfamily. MDH type 2 family.

The catalysed reaction is (S)-malate + NAD(+) = oxaloacetate + NADH + H(+). Catalyzes the reversible oxidation of malate to oxaloacetate. This Paraburkholderia phytofirmans (strain DSM 17436 / LMG 22146 / PsJN) (Burkholderia phytofirmans) protein is Malate dehydrogenase.